The sequence spans 57 residues: UPF0391 membrane protein Nham_2738 (57 aa).

A run of 2 helical transmembrane segments spans residues 4-24 (WVVT…GGLA) and 30-50 (IAKI…VVGL).

It belongs to the UPF0391 family.

Its subcellular location is the cell membrane. The polypeptide is UPF0391 membrane protein Nham_2738 (Nitrobacter hamburgensis (strain DSM 10229 / NCIMB 13809 / X14)).